Reading from the N-terminus, the 175-residue chain is ATP-dependent protease subunit HslV (175 aa).

The active site involves T2. 3 residues coordinate Na(+): A156, C159, and T162.

This sequence belongs to the peptidase T1B family. HslV subfamily. As to quaternary structure, a double ring-shaped homohexamer of HslV is capped on each side by a ring-shaped HslU homohexamer. The assembly of the HslU/HslV complex is dependent on binding of ATP.

The protein localises to the cytoplasm. It catalyses the reaction ATP-dependent cleavage of peptide bonds with broad specificity.. Its activity is regulated as follows. Allosterically activated by HslU binding. Its function is as follows. Protease subunit of a proteasome-like degradation complex believed to be a general protein degrading machinery. The protein is ATP-dependent protease subunit HslV of Rhizobium johnstonii (strain DSM 114642 / LMG 32736 / 3841) (Rhizobium leguminosarum bv. viciae).